Consider the following 39-residue polypeptide: Cytochrome b559 subunit beta (39 aa).

A helical membrane pass occupies residues 14-30 (WLAIHGLAVPTVFSLGS). His-18 lines the heme pocket.

Belongs to the PsbE/PsbF family. As to quaternary structure, heterodimer of an alpha subunit and a beta subunit. PSII is composed of 1 copy each of membrane proteins PsbA, PsbB, PsbC, PsbD, PsbE, PsbF, PsbH, PsbI, PsbJ, PsbK, PsbL, PsbM, PsbT, PsbX, PsbY, PsbZ, Psb30/Ycf12, at least 3 peripheral proteins of the oxygen-evolving complex and a large number of cofactors. It forms dimeric complexes. Heme b serves as cofactor.

It localises to the plastid. The protein resides in the chloroplast thylakoid membrane. Functionally, this b-type cytochrome is tightly associated with the reaction center of photosystem II (PSII). PSII is a light-driven water:plastoquinone oxidoreductase that uses light energy to abstract electrons from H(2)O, generating O(2) and a proton gradient subsequently used for ATP formation. It consists of a core antenna complex that captures photons, and an electron transfer chain that converts photonic excitation into a charge separation. The sequence is that of Cytochrome b559 subunit beta from Huperzia lucidula (Shining clubmoss).